A 68-amino-acid chain; its full sequence is Large ribosomal subunit protein uL29 (68 aa).

This sequence belongs to the universal ribosomal protein uL29 family.

This Chlorobaculum parvum (strain DSM 263 / NCIMB 8327) (Chlorobium vibrioforme subsp. thiosulfatophilum) protein is Large ribosomal subunit protein uL29.